The sequence spans 343 residues: Heat-inducible transcription repressor HrcA (343 aa).

Belongs to the HrcA family.

Functionally, negative regulator of class I heat shock genes (grpE-dnaK-dnaJ and groELS operons). Prevents heat-shock induction of these operons. The polypeptide is Heat-inducible transcription repressor HrcA (Mycolicibacterium gilvum (strain PYR-GCK) (Mycobacterium gilvum (strain PYR-GCK))).